Reading from the N-terminus, the 196-residue chain is Ribonuclease H (196 aa).

The 139-residue stretch at 58 to 196 folds into the RNase H type-1 domain; the sequence is LAKEEIIWES…GEIKADYGRK (139 aa). Mg(2+) contacts are provided by aspartate 71, glutamate 109, aspartate 132, and aspartate 192.

It belongs to the RNase H family. Mn(2+) is required as a cofactor. Requires Mg(2+) as cofactor.

It is found in the cytoplasm. It catalyses the reaction Endonucleolytic cleavage to 5'-phosphomonoester.. In terms of biological role, endonuclease that specifically degrades the RNA of RNA-DNA hybrids. This is Ribonuclease H (rnhA) from Halalkalibacterium halodurans (strain ATCC BAA-125 / DSM 18197 / FERM 7344 / JCM 9153 / C-125) (Bacillus halodurans).